A 670-amino-acid polypeptide reads, in one-letter code: Neutral ceramidase (670 aa).

An N-terminal signal peptide occupies residues 1 to 24; it reads MSRSAFTALLLSCVLLALSMPARA. H61 provides a ligand contact to Mg(2+). N84, Q92, and D111 together coordinate substrate. Residue H121 participates in Zn(2+) binding. Residue S130 participates in substrate binding. H228 contributes to the Zn(2+) binding site. Residue S274 is the Nucleophile of the active site. The cysteines at positions 346 and 394 are disulfide-linked. E435 lines the Zn(2+) pocket. Position 469 (Y469) interacts with substrate. A Zn(2+)-binding site is contributed by Y472. Residues D603, D605, and T608 each contribute to the Mg(2+) site. The required for correct folding and localization stretch occupies residues 644–670; sequence NAKNFWTQKISEIGGSTRSFEVLGTTP.

The protein belongs to the neutral ceramidase family. Homodimer. The cofactor is Zn(2+). It depends on Mg(2+) as a cofactor.

It is found in the secreted. The enzyme catalyses an N-acylsphing-4-enine + H2O = sphing-4-enine + a fatty acid. Inhibited by EDTA, EGTA and D/L-sphinganine D-erythro-sphingosine. L-erythro-sphingosine is a less powerful inhibitor. Stimulated by glycerophospholipids: cardiolipin is the most effective, followed by phosphatidic acid, phosphatidylethanolamine and phosphatidylglycerol, whereas phosphatidylcholine, lysophosphatidic acid and diacylglycerol are less effective. Its function is as follows. Catalyzes the cleavage of the N-acyl linkage of the ceramides (Cers) to yield sphingosine (Sph) and free fatty acid at an optimal pH of 8-9. Also catalyzes the synthesis of Cers from Sph and fatty acid. This is Neutral ceramidase from Pseudomonas aeruginosa (strain ATCC 15692 / DSM 22644 / CIP 104116 / JCM 14847 / LMG 12228 / 1C / PRS 101 / PAO1).